Here is a 738-residue protein sequence, read N- to C-terminus: NAD(P)H-quinone oxidoreductase subunit 5, chloroplastic (738 aa).

The next 16 membrane-spanning stretches (helical) occupy residues 9–29, 40–60, 89–109, 125–145, 147–167, 185–205, 230–250, 258–278, 280–300, 327–347, 354–374, 396–416, 425–445, 546–566, 603–623, and 718–738; these read WIIP…LLLF, WAFP…NLSI, IDPL…MVLI, FASM…SNLI, IYIF…FWFT, GDFG…SFEF, AALL…HVWL, TPIS…FLVA, LLPL…IGII, LGYM…FHLI, ALLF…VGYS, ISFL…CFWS, WLYS…TAFY, LFPL…GIPF, FSVS…KPIY, and YLFF…FPVF.

It belongs to the complex I subunit 5 family. NDH is composed of at least 16 different subunits, 5 of which are encoded in the nucleus.

The protein resides in the plastid. Its subcellular location is the chloroplast thylakoid membrane. It carries out the reaction a plastoquinone + NADH + (n+1) H(+)(in) = a plastoquinol + NAD(+) + n H(+)(out). The enzyme catalyses a plastoquinone + NADPH + (n+1) H(+)(in) = a plastoquinol + NADP(+) + n H(+)(out). Its function is as follows. NDH shuttles electrons from NAD(P)H:plastoquinone, via FMN and iron-sulfur (Fe-S) centers, to quinones in the photosynthetic chain and possibly in a chloroplast respiratory chain. The immediate electron acceptor for the enzyme in this species is believed to be plastoquinone. Couples the redox reaction to proton translocation, and thus conserves the redox energy in a proton gradient. The polypeptide is NAD(P)H-quinone oxidoreductase subunit 5, chloroplastic (ndhF) (Ligustrum vulgare (Common privet)).